Consider the following 727-residue polypeptide: ABC transporter G family member 6 (727 aa).

In terms of domain architecture, ABC transporter spans 68-333 (LSFTDLTYSV…FAEFGHPIPE (266 aa)). Residue 126-133 (GASGSGKS) participates in ATP binding. The ABC transmembrane type-2 domain occupies 421 to 631 (VELAVLAKRS…PYEAVLLNEF (211 aa)). Transmembrane regions (helical) follow at residues 440–460 (LFGIRLGAVLVTGFILATMFW), 475–495 (CFAFAMSTTFYTCADALPVFL), 517–537 (LSHSLVALPSLIILSLAFAAI), 560–580 (ASFWAGSSFVTFLSGVVPHVM), 581–601 (LGYTIVVAILAYFLLFSGFFI), and 700–720 (LWVTVAWGFFFRILFYFSLLL).

Belongs to the ABC transporter superfamily. ABCG family. Eye pigment precursor importer (TC 3.A.1.204) subfamily.

The protein localises to the membrane. This chain is ABC transporter G family member 6 (ABCG6), found in Arabidopsis thaliana (Mouse-ear cress).